A 764-amino-acid chain; its full sequence is Putative wall-associated receptor kinase-like 13 (764 aa).

The signal sequence occupies residues methionine 1–cysteine 26. Topologically, residues threonine 27–glutamate 379 are extracellular. 8 N-linked (GlcNAc...) asparagine glycosylation sites follow: asparagine 78, asparagine 114, asparagine 121, asparagine 164, asparagine 233, asparagine 238, asparagine 259, and asparagine 283. The atypical EGF-like stretch occupies residues cysteine 308–cysteine 372. 3 disulfides stabilise this stretch: cysteine 310/cysteine 323, cysteine 345/cysteine 363, and cysteine 352/cysteine 372. The N-linked (GlcNAc...) asparagine glycan is linked to asparagine 365. A helical transmembrane segment spans residues valine 380–tryptophan 400. Residues arginine 401 to methionine 764 are Cytoplasmic-facing. Residues phenylalanine 454–isoleucine 728 form the Protein kinase domain. Residues isoleucine 460–valine 468 and lysine 482 contribute to the ATP site. Residue tyrosine 527 is modified to Phosphotyrosine. Aspartate 579 acts as the Proton acceptor in catalysis. Residues threonine 613 and threonine 618 each carry the phosphothreonine modification. Tyrosine 626 carries the phosphotyrosine modification.

Belongs to the protein kinase superfamily. Ser/Thr protein kinase family.

The protein localises to the membrane. The enzyme catalyses L-seryl-[protein] + ATP = O-phospho-L-seryl-[protein] + ADP + H(+). It catalyses the reaction L-threonyl-[protein] + ATP = O-phospho-L-threonyl-[protein] + ADP + H(+). Its function is as follows. Putative serine/threonine-protein kinase that may function as a signaling receptor of extracellular matrix component. This is Putative wall-associated receptor kinase-like 13 (WAKL13) from Arabidopsis thaliana (Mouse-ear cress).